Here is a 228-residue protein sequence, read N- to C-terminus: Vesicle transport protein SEC20 (228 aa).

At 1-199 (MAAPQDVHVR…LITKYNRREL (199 aa)) the chain is on the cytoplasmic side. Positions 37–90 (LSELTELNTKVKEKFQQLKHRIQELEQSAKEQDKESEKQLLLQEVENHKKQMLS) form a coiled coil. The chain crosses the membrane as a helical; Anchor for type IV membrane protein span at residues 200-220 (TDKLLIFLALALFLATVLYIV). Topologically, residues 221-228 (KKRLFPFL) are lumenal.

The protein belongs to the SEC20 family. Component of a SNARE complex consisting of STX18, USE1L, BNIP1/SEC20L and SEC22B. Interacts directly with STX18, RINT1/TIP20L and NAPA. Interacts with ZW10 through RINT1. Interacts with BCL2. Interacts with RNF186. Interacts with RNF185. Interacts with SQSTM1; increased by 'Lys-63'-linked polyubiquitination of BNIP1. Polyubiquitinated. 'Lys-63'-linked polyubiquitination by RNF185 increases the interaction with the autophagy receptor SQSTM1. Undergoes 'Lys-29'- and 'Lys-63'-linked polyubiquitination by RNF186 that may regulate BNIP1 localization to the mitochondrion.

The protein resides in the endoplasmic reticulum membrane. It localises to the mitochondrion membrane. As part of a SNARE complex may be involved in endoplasmic reticulum membranes fusion and be required for the maintenance of endoplasmic reticulum organization. Also plays a role in apoptosis. It is for instance required for endoplasmic reticulum stress-induced apoptosis. As a substrate of RNF185 interacting with SQSTM1, might also be involved in mitochondrial autophagy. This is Vesicle transport protein SEC20 from Rattus norvegicus (Rat).